Reading from the N-terminus, the 93-residue chain is Alpha-defensin 1 (93 aa).

Positions 1 to 19 are cleaved as a signal peptide; the sequence is MKKLVLLFALVLLGFQVQA. A propeptide spanning residues 20-58 is cleaved from the precursor; the sequence is DSIQNTDEETKTEEQPGEEDQAVSVSFGDPEGTSLQEES. The tract at residues 24 to 54 is disordered; the sequence is NTDEETKTEEQPGEEDQAVSVSFGDPEGTSL. Intrachain disulfides connect C64/C92, C66/C81, and C71/C91.

This sequence belongs to the alpha-defensin family. As to expression, paneth cells of the small bowel.

It is found in the secreted. In terms of biological role, probably contributes to the antimicrobial barrier function of the small bowel mucosa. Has antibacterial activity against attenuated mutants of S.typhimurium. The chain is Alpha-defensin 1 (Defa1) from Mus musculus (Mouse).